Consider the following 247-residue polypeptide: ATP synthase subunit a, chloroplastic (247 aa).

A run of 5 helical transmembrane segments spans residues 38–58, 95–115, 134–154, 199–219, and 220–240; these read QVLI…TIAV, VPFI…GALL, INTT…AGLT, LVVV…VMFL, and GLFT…AYIG.

This sequence belongs to the ATPase A chain family. As to quaternary structure, F-type ATPases have 2 components, CF(1) - the catalytic core - and CF(0) - the membrane proton channel. CF(1) has five subunits: alpha(3), beta(3), gamma(1), delta(1), epsilon(1). CF(0) has four main subunits: a, b, b' and c.

The protein resides in the plastid. The protein localises to the chloroplast thylakoid membrane. Its function is as follows. Key component of the proton channel; it plays a direct role in the translocation of protons across the membrane. The protein is ATP synthase subunit a, chloroplastic of Panax ginseng (Korean ginseng).